Reading from the N-terminus, the 292-residue chain is UPF0725 protein At4g28920 (292 aa).

Residues 1–17 (MSENDSSESDIEMDPEE) are compositionally biased toward acidic residues. The segment at 1–24 (MSENDSSESDIEMDPEEEKVYRRQ) is disordered.

The protein belongs to the UPF0725 (EMB2204) family.

This is UPF0725 protein At4g28920 from Arabidopsis thaliana (Mouse-ear cress).